We begin with the raw amino-acid sequence, 570 residues long: Molecular chaperone MKKS (570 aa).

192–199 is a binding site for ATP; it reads GHIILGKS. A substrate-binding apical domain region spans residues 198 to 370; the sequence is KSLIVPLKGQ…FHLIPNEATI (173 aa).

The protein belongs to the TCP-1 chaperonin family. In terms of assembly, component of a complex composed at least of MKKS, BBS10, BBS12, TCP1, CCT2, CCT3, CCT4, CCT5 and CCT8. Interacts with STUB1. Interacts with BBS2 (via coiled coil domain). Interacts with CCDC28B. Interacts with BBS12. Interacts with SMARCC1, a component of the SWI/SNF complexes; the interaction takes place predominantly in the cytoplasm and may modulate SMARCC1 location. Interacts with DLEC1.

Its subcellular location is the cytoplasm. It is found in the cytoskeleton. The protein localises to the microtubule organizing center. It localises to the centrosome. The protein resides in the cytosol. Its subcellular location is the nucleus. Functionally, probable molecular chaperone that assists the folding of proteins upon ATP hydrolysis. Plays a role in the assembly of BBSome, a complex involved in ciliogenesis regulating transports vesicles to the cilia. May play a role in protein processing in limb, cardiac and reproductive system development. May play a role in cytokinesis. The polypeptide is Molecular chaperone MKKS (MKKS) (Pongo abelii (Sumatran orangutan)).